A 552-amino-acid chain; its full sequence is Non-structural protein NS1 (552 aa).

In Bluetongue virus 1 (isolate South Africa) (BTV 1), this protein is Non-structural protein NS1 (Segment-5).